We begin with the raw amino-acid sequence, 362 residues long: C-C chemokine receptor type 10 (362 aa).

Topologically, residues methionine 1 to serine 48 are extracellular. The helical transmembrane segment at leucine 49 to alanine 69 threads the bilayer. Over arginine 70–histidine 80 the chain is Cytoplasmic. The chain crosses the membrane as a helical span at residues leucine 81–glycine 101. Residues alanine 102–alanine 115 lie on the Extracellular side of the membrane. A disulfide bond links cysteine 113 and cysteine 191. Residues isoleucine 116–alanine 136 traverse the membrane as a helical segment. Residues aspartate 137–histidine 159 are Cytoplasmic-facing. Residues leucine 160–serine 180 form a helical membrane-spanning segment. Residues arginine 181 to alanine 208 lie on the Extracellular side of the membrane. Residues valine 209 to leucine 229 form a helical membrane-spanning segment. The Cytoplasmic segment spans residues leucine 230–arginine 247. A helical membrane pass occupies residues valine 248 to leucine 268. Residues leucine 269–alanine 291 are Extracellular-facing. A helical membrane pass occupies residues leucine 292–phenylalanine 312. The Cytoplasmic segment spans residues leucine 313–asparagine 362.

The protein belongs to the G-protein coupled receptor 1 family. Expressed at high levels in small intestine, colon, lymph nodes, Peyer patches and at lower levels in thymus, lung and spleen.

Its subcellular location is the cell membrane. In terms of biological role, receptor for chemokines SCYA27 and SCYA28. Subsequently transduces a signal by increasing the intracellular calcium ions level. This chain is C-C chemokine receptor type 10 (Ccr10), found in Mus musculus (Mouse).